We begin with the raw amino-acid sequence, 82 residues long: MGIFDWKHWIVILIVVVLVFGTKRLKNLGSDVGEAIKGFRKAVNTEEDDKKEQPAAQPAQPLNQPHTIDAQAQKVEEPARKD.

The chain crosses the membrane as a helical span at residues 1 to 21; that stretch reads MGIFDWKHWIVILIVVVLVFG. Residues 43 to 82 form a disordered region; it reads VNTEEDDKKEQPAAQPAQPLNQPHTIDAQAQKVEEPARKD.

The protein belongs to the TatA/E family. The Tat system comprises two distinct complexes: a TatABC complex, containing multiple copies of TatA, TatB and TatC subunits, and a separate TatA complex, containing only TatA subunits. Substrates initially bind to the TatABC complex, which probably triggers association of the separate TatA complex to form the active translocon.

It is found in the cell inner membrane. Its function is as follows. Part of the twin-arginine translocation (Tat) system that transports large folded proteins containing a characteristic twin-arginine motif in their signal peptide across membranes. TatA could form the protein-conducting channel of the Tat system. This chain is Sec-independent protein translocase protein TatA, found in Pseudomonas paraeruginosa (strain DSM 24068 / PA7) (Pseudomonas aeruginosa (strain PA7)).